Reading from the N-terminus, the 688-residue chain is Polyribonucleotide nucleotidyltransferase (688 aa).

Positions 484 and 490 each coordinate Mg(2+). One can recognise a KH domain in the interval 550–609 (PTTEIFNVAPDKIVEIIGQGGRVIKEIVEKFEVKIDLNKPSGEVKIMGNKERVLKTKEFI). Positions 626–688 (DEVLEAQVKR…NKGKIALDLA (63 aa)) constitute an S1 motif domain.

The protein belongs to the polyribonucleotide nucleotidyltransferase family. Mg(2+) serves as cofactor.

The protein resides in the cytoplasm. The catalysed reaction is RNA(n+1) + phosphate = RNA(n) + a ribonucleoside 5'-diphosphate. Involved in mRNA degradation. Catalyzes the phosphorolysis of single-stranded polyribonucleotides processively in the 3'- to 5'-direction. This is Polyribonucleotide nucleotidyltransferase from Helicobacter pylori (strain P12).